The chain runs to 443 residues: D-alanyl-L-alanine endopeptidase (443 aa).

The Peptidase C51 domain maps to 1–131 (MATYQEYKSR…KIPYSATYPT (131 aa)). The active-site Nucleophile is cysteine 26. Histidine 91 functions as the Increases nucleophilicity of active site cys; for D-alanyl-L-alanine endopeptidase activity in the catalytic mechanism. The tract at residues 145-344 (TDNTGLNKGD…GLDKNIVLLA (200 aa)) is acm domain. An SH3b domain is found at 380-441 (YYEATLSTDY…VEDNYLVNAT (62 aa)).

This sequence belongs to the glycosyl hydrolase 25 family.

The catalysed reaction is Hydrolysis of (1-&gt;4)-beta-linkages between N-acetylmuramic acid and N-acetyl-D-glucosamine residues in a peptidoglycan and between N-acetyl-D-glucosamine residues in chitodextrins.. With respect to regulation, ca++ enhances the activity of the enzyme. The endopeptidase activity cleaves the bacterial peptidoglycan between D-alanine and L-alanine. The N-acetyl-muramidase activity cleaves between N-acetylmuramic acid and N-acetylglucosamine bonds. This chain is D-alanyl-L-alanine endopeptidase, found in Streptococcus agalactiae (Streptococcus agalactiae bacteriophage B30).